A 458-amino-acid chain; its full sequence is MIPSTAAAALLTLTAGVALAHPGCGGQEIGRRNVGGPMVYRRDVTDEASAAASTDVNTECTAYGYAPVTEIASSFPTIWETASILSNDTEGQQLFATINSTLNTKLPNDVPHGTPTGDWTGVNYNSSDPDCWWTHNKCTTPASDTGLEADITIVPEPMTWGLGFDDGPNCSHNALYNLLSENNQKATMFFIGSNVMDWPLQAMRAHDEGHQICVHTWSHQYMTALSNEVVFAELYYTQKAIKAVLGVTPQCWRPPYGDVDNRVRMIAQALNLTTIIWSDDTDDWAAGTDGVTEQDVTDNYQAVIDKAGNGTYTTHGPVVLNHELTNYTMSVFMTMFPKIKSAFSYIVPMCTAYNITQPYLESNVTCPNFETYISGVTNISSSTTQKDGSSSTNTSSSGSGSAAGSASATSSSDDSSSSGSASASSSSSNASSGALGMFDGLSGVGLVLSGVVAGVMLL.

An N-terminal signal peptide occupies residues 1–51; the sequence is MIPSTAAAALLTLTAGVALAHPGCGGQEIGRRNVGGPMVYRRDVTDEASAA. N87, N99, and N125 each carry an N-linked (GlcNAc...) asparagine glycan. The region spanning 158–348 is the NodB homology domain; sequence MTWGLGFDDG…IKSAFSYIVP (191 aa). Catalysis depends on D165, which acts as the Proton acceptor. D165 is a binding site for acetate. A Co(2+)-binding site is contributed by D166. A glycan (N-linked (GlcNAc...) asparagine) is linked at N169. 2 residues coordinate Co(2+): H215 and H219. Y256 serves as a coordination point for acetate. N-linked (GlcNAc...) asparagine glycans are attached at residues N271 and N309. Residue H322 is the Proton donor of the active site. N326, N354, N363, N378, and N393 each carry an N-linked (GlcNAc...) asparagine glycan. A disordered region spans residues 382 to 430; that stretch reads STTQKDGSSSTNTSSSGSGSAAGSASATSSSDDSSSSGSASASSSSSNA. S427 carries the GPI-anchor amidated serine lipid modification. Residues 428–458 constitute a propeptide, removed in mature form; it reads SNASSGALGMFDGLSGVGLVLSGVVAGVMLL. N429 carries N-linked (GlcNAc...) asparagine glycosylation.

It belongs to the polysaccharide deacetylase family. The cofactor is Co(2+). Post-translationally, glycosylated.

The protein localises to the secreted. It is found in the cell wall. The protein resides in the cell membrane. The enzyme catalyses [(1-&gt;4)-N-acetyl-beta-D-glucosaminyl](n) + n H2O = chitosan + n acetate. Its function is as follows. Hydrolyzes the N-acetamido groups of N-acetyl-D-glucosamine residues in chitin to form chitosan and acetate. Chitosan is required to anchor melanin to the cell wall, for maintenance of cell wall integrity, and for cytokinesis. The polypeptide is Chitin deacetylase 2 (Cryptococcus neoformans var. neoformans serotype D (strain B-3501A) (Filobasidiella neoformans)).